Here is a 279-residue protein sequence, read N- to C-terminus: Large ribosomal subunit protein mL46 (279 aa).

Lys-230 is modified (N6-acetyllysine).

It belongs to the mitochondrion-specific ribosomal protein mL46 family. In terms of assembly, component of the mitochondrial ribosome large subunit (39S) which comprises a 16S rRNA and about 50 distinct proteins.

The protein localises to the mitochondrion. The polypeptide is Large ribosomal subunit protein mL46 (MRPL46) (Pongo abelii (Sumatran orangutan)).